The following is a 106-amino-acid chain: Large ribosomal subunit protein bL21 (106 aa).

This sequence belongs to the bacterial ribosomal protein bL21 family. As to quaternary structure, part of the 50S ribosomal subunit. Contacts protein L20.

Its function is as follows. This protein binds to 23S rRNA in the presence of protein L20. The polypeptide is Large ribosomal subunit protein bL21 (Fervidobacterium nodosum (strain ATCC 35602 / DSM 5306 / Rt17-B1)).